The primary structure comprises 329 residues: GTP 3',8-cyclase (329 aa).

In terms of domain architecture, Radical SAM core spans 8 to 229; that stretch reads AFARTFYYLR…AGWQRRLPGR (222 aa). Arg-17 contributes to the GTP binding site. The [4Fe-4S] cluster site is built by Cys-24 and Cys-28. Residue Tyr-30 participates in S-adenosyl-L-methionine binding. Cys-31 is a binding site for [4Fe-4S] cluster. Position 68 (Arg-68) interacts with GTP. Gly-72 contributes to the S-adenosyl-L-methionine binding site. Position 99 (Thr-99) interacts with GTP. S-adenosyl-L-methionine is bound at residue Ser-123. Lys-160 contacts GTP. Met-194 is a binding site for S-adenosyl-L-methionine. 2 residues coordinate [4Fe-4S] cluster: Cys-257 and Cys-260. 262 to 264 provides a ligand contact to GTP; the sequence is RLR. Position 274 (Cys-274) interacts with [4Fe-4S] cluster.

The protein belongs to the radical SAM superfamily. MoaA family. Monomer and homodimer. It depends on [4Fe-4S] cluster as a cofactor.

The catalysed reaction is GTP + AH2 + S-adenosyl-L-methionine = (8S)-3',8-cyclo-7,8-dihydroguanosine 5'-triphosphate + 5'-deoxyadenosine + L-methionine + A + H(+). It participates in cofactor biosynthesis; molybdopterin biosynthesis. In terms of biological role, catalyzes the cyclization of GTP to (8S)-3',8-cyclo-7,8-dihydroguanosine 5'-triphosphate. This Edwardsiella ictaluri (strain 93-146) protein is GTP 3',8-cyclase.